Consider the following 4473-residue polypeptide: Plectin (4473 aa).

Calponin-homology (CH) domains are found at residues 1 to 74 (DGHN…LHFQ) and 87 to 192 (MTAK…DAMP). Positions 1 to 192 (DGHNLISLLE…YVSSLYDAMP (192 aa)) are actin-binding. Residues 1–1259 (DGHNLISLLE…SELTTLTSQY (1259 aa)) are globular 1. One copy of the Spectrin 1 repeat lies at 449 to 508 (RYLQDLLAWVEENQRRIDSAEWGVDLPSVEAQLGSHRGMHQSIEEFRAKIERARNDESQL). Serine 509 bears the Phosphoserine mark. Spectrin repeat units follow at residues 529-613 (KLLN…REDH) and 626-719 (LQTQ…AIVQ). Phosphothreonine is present on threonine 604. The 58-residue stretch at 730–787 (RGHVPLMAVCDYKQVEVTVHKGDQCQLVGPAQPSHWKVLRGPSSEAAVPSVCFLVPPP) folds into the SH3 domain. Serine 836 carries the post-translational modification Phosphoserine. Residues 1104–1204 (RERVNQLLER…QKFAKQYINA (101 aa)) form a Spectrin 4 repeat. Serine 1224 is subject to Phosphoserine. Positions 1258-2548 (QYIKFISETL…EEIAATQAAA (1291 aa)) form a coiled coil. Residues 1260–2544 (IKFISETLRR…LAHSEEIAAT (1285 aa)) are central fibrous rod domain. Disordered regions lie at residues 1274-1293 (ERLAEQQRAEERERLAEGEA) and 1407-1434 (RAEEAEAQKRQAQEEAERLRRQVQDESQ). Serine 1510 bears the Phosphoserine mark. Residue lysine 1514 is modified to N6-acetyllysine. Disordered stretches follow at residues 1529 to 1550 (VTQLREKAERRAQQQAEAERAR), 1582 to 1616 (SLAQADAEKQKEEAEREARRRGKAEEQAVRQRELA), 1881 to 1929 (AEDT…AARQ), 1950 to 1971 (LRERAEQESARQLQLAQEAAQK), and 2003 to 2098 (ERLR…KHKK). Composition is skewed to basic and acidic residues over residues 1587–1616 (DAEKQKEEAEREARRRGKAEEQAVRQRELA), 1881–1897 (AEDTMRSKEQAEQEAAR), and 1905–1917 (EEQRRREAEERVQ). Over residues 1959–1968 (ARQLQLAQEA) the composition is skewed to low complexity. Basic and acidic residues predominate over residues 2003-2047 (ERLRGEAEAARRAAEEAEEAREQAEREAAQSRKQVEEAERLKQSA). Residues 2048-2061 (EEQAQARAQAQAAA) show a composition bias toward low complexity. The span at 2062-2077 (EKLRKEAEQEAARRAQ) shows a compositional bias: basic and acidic residues. Phosphoserine is present on serine 2420. Lysine 2425 is subject to N6-acetyllysine. The disordered stretch occupies residues 2457-2476 (REEQQRQQRQMEQEKQELVA). Residues 2545–4473 (QAAAAKALPN…SLGGPESAVA (1929 aa)) are globular 2. Phosphoserine is present on residues serine 2563 and serine 2591. Plectin repeat units follow at residues 2615–2652 (RQYLQGRSSIAGLLLKPTDEKLSVYTALQRQLLSPGTA), 2653–2690 (LILLEAQAASGFLLDPVRNRRLTVNEPVKEGVVGPELH), 2691–2728 (HKLLSAERAVTGYKDPYTGEQISLFQAMKKDLLVRDHA), 2729–2766 (IRLLEAQIATGGIIDTVHSHRVPVDVAYQRGYFDEEMS), and 2770–2804 (ADPGDDTKGFFDPNTHENLTYLQLLERCVEDPETG). Threonine 2675 bears the Phosphothreonine mark. Tyrosine 2822 is modified (phosphotyrosine). 2 positions are modified to N6-acetyllysine: lysine 2842 and lysine 2880. Plectin repeat units lie at residues 2905-2942 (ALVPAAELLESGVISHELYQQLQRGERSVREVAEADSV), 2943-2980 (RRALRGASVIAGVWLEEAGQKLSIYEALKKDLLQPDVA), 2981-3018 (VALLEAQAGTGHIIDPATSARLTVDEAVRAGLVGPELH), 3019-3056 (EKLLSAEKAVTGYRDPYSGQSVSLFQALKKGLIPREQG), and 3057-3094 (LRLLDAQLSTGGMVDPSKSHRVPLDVAYARGYLDKETN). Phosphotyrosine is present on tyrosine 3151. An N6-acetyllysine modification is found at lysine 3209. Plectin repeat units follow at residues 3274–3311 (RTLLQGSGCLAGVYLEDSKEKVTIYEAMRRGLLRPSTA), 3312–3349 (TLLLEAQAATGFLVDPVRNQRLYVHEAVKAGVVGPELH), 3350–3387 (EKLLSAEKAVTGYKDPYSGTTISLFQAMKKGLVLREHA), 3388–3425 (IRLLEAQIATGGIIDPVHSHRLPVDVAYQRGYFDEEMS), and 3429–3463 (ADPSDDTKGFFDPNTHENLTYLQLLERCVEDPETG). The residue at position 3574 (threonine 3574) is a Phosphothreonine. At tyrosine 3579 the chain carries Phosphotyrosine. 6 Plectin repeats span residues 3609-3646 (WRYLYGTGSVAGVYLPGSRQTLTIYQALKKGLLSAEVA), 3647-3684 (RLLLEAQAATGFLLDPVKGERLTVDEAVRKGLVGPELH), 3685-3722 (DRLLSAERAVTGYRDPYTEQTISLFQAMKKELIPAEEA), 3723-3760 (LRLLDAQLATGGIVDPRLGFHLPLEVAYQRGYLNKDTH), 3764-3797 (SEPSEVRSYVDPSTDERLSYTQLLKRCRRDDGSG), and 3800-3834 (LLPLSDARRLTFRGLRKQITVEELVRSQVMDEATA). Threonine 3819 carries the phosphothreonine modification. Phosphoserine is present on serine 3843. Plectin repeat units follow at residues 3852 to 3889 (QKFLEGTSCIAGVFVDATKERLSVYQAMKKGIIRPGTA), 3890 to 3927 (FELLEAQAATGYVIDPIKGLKLTVEEAVRMGIVGPEFK), 3928 to 3965 (DRLLSAERAVTGYKDPYSGKLISLFQAMKKGLILKDHG), 3966 to 4003 (IRLLEAQIATGGIIDPEESHRLPVEVAYKRGLFDEEMN), 4007 to 4041 (TDPSDDTKGFFDPNTEENLTYLQLMERCITDPQTG), and 4043 to 4094 (RLLP…HQTY). The interval 4039–4089 (QTGLRLLPLKEKKRERKTSSKSSVRKRRVVIVDPETSKEMSVYEAYRKGLI) is binding to intermediate filaments. 8 positions are modified to phosphoserine: serine 4171, serine 4173, serine 4174, serine 4175, serine 4178, serine 4179, serine 4180, and serine 4181. Position 4182 is a phosphotyrosine (tyrosine 4182). Serine 4185, serine 4189, and serine 4195 each carry phosphoserine. Plectin repeat units follow at residues 4197-4234 (SDPTEETGPVAGILDTETLEKVSITEAMHRNLVDNITG), 4235-4272 (QRLLEAQACTGGIIDPSTGERFPVTEAVNKGLVDKIMV), 4273-4310 (DRINLAQKAFCGFEDPRTKTKMSAAQALKKGWLYYEAG), 4311-4348 (QRFLEVQYLTGGLIEPDTPGRVPLDEALQRGTVDARTA), and 4349-4386 (QKLRDVSAYSKYLTCPKTKLKISYKDALDRSMVEEGTG). Threonine 4200 is modified (phosphothreonine). Residue threonine 4328 is modified to Phosphothreonine; by CDK1. A phosphoserine mark is found at serine 4396 and serine 4402. Residues 4400–4460 (YYSPYSVSGS…SGYGRRYASG (61 aa)) show a composition bias toward low complexity. The interval 4400–4473 (YYSPYSVSGS…SLGGPESAVA (74 aa)) is disordered. Tyrosine 4404 carries the post-translational modification Phosphotyrosine. 3 positions are modified to phosphoserine: serine 4405, serine 4407, and serine 4411. Position 4412 is a phosphothreonine (threonine 4412). The tract at residues 4414-4429 (GSRTGSRTGSRAGSRR) is 4 X 4 AA tandem repeats of G-S-R-X. Position 4415 is a phosphoserine (serine 4415). Arginine 4416 and arginine 4429 each carry omega-N-methylarginine. Residues serine 4431 and serine 4464 each carry the phosphoserine modification.

The protein belongs to the plakin or cytolinker family. Homodimer or homotetramer. Interacts (via actin-binding domain) with SYNE3. Interacts (via calponin-homology (CH) 1 domain) with VIM (via rod region). Interacts (via N-terminus) with DST isoform 2 (via N-terminus). Interacts with FER. Interacts with TOR1A. Interacts with ANK3. Identified in complexes that contain VIM, EZR, AHNAK, BFSP1, BFSP2, ANK2, PLEC, PRX and spectrin. Phosphorylated by CDK1; regulates dissociation from intermediate filaments during mitosis.

It localises to the cytoplasm. The protein localises to the cytoskeleton. Its subcellular location is the cell junction. It is found in the hemidesmosome. The protein resides in the cell projection. It localises to the podosome. Functionally, interlinks intermediate filaments with microtubules and microfilaments and anchors intermediate filaments to desmosomes or hemidesmosomes. May be involved not only in the cross-linking and stabilization of cytoskeletal intermediate filaments network, but also in the regulation of their dynamics. This Cricetulus griseus (Chinese hamster) protein is Plectin (PLEC).